A 238-amino-acid chain; its full sequence is Ribosomal RNA small subunit methyltransferase G (238 aa).

S-adenosyl-L-methionine contacts are provided by residues Gly77, Phe82, 128 to 129, and Arg147; that span reads AE.

The protein belongs to the methyltransferase superfamily. RNA methyltransferase RsmG family.

The protein localises to the cytoplasm. Its function is as follows. Specifically methylates the N7 position of guanine in position 535 of 16S rRNA. In Geobacillus kaustophilus (strain HTA426), this protein is Ribosomal RNA small subunit methyltransferase G.